We begin with the raw amino-acid sequence, 34 residues long: MEVNILAFIATVLFILVPTAFLLIIYVKTVSQND.

Residues 5–25 (ILAFIATVLFILVPTAFLLII) traverse the membrane as a helical segment.

This sequence belongs to the PsbM family. In terms of assembly, PSII is composed of 1 copy each of membrane proteins PsbA, PsbB, PsbC, PsbD, PsbE, PsbF, PsbH, PsbI, PsbJ, PsbK, PsbL, PsbM, PsbT, PsbX, PsbY, PsbZ, Psb30/Ycf12, at least 3 peripheral proteins of the oxygen-evolving complex and a large number of cofactors. It forms dimeric complexes.

It is found in the plastid. The protein resides in the chloroplast thylakoid membrane. In terms of biological role, one of the components of the core complex of photosystem II (PSII). PSII is a light-driven water:plastoquinone oxidoreductase that uses light energy to abstract electrons from H(2)O, generating O(2) and a proton gradient subsequently used for ATP formation. It consists of a core antenna complex that captures photons, and an electron transfer chain that converts photonic excitation into a charge separation. This subunit is found at the monomer-monomer interface. The chain is Photosystem II reaction center protein M from Piper cenocladum (Ant piper).